Consider the following 177-residue polypeptide: Thymidine kinase (177 aa).

Position 11–18 (11–18) interacts with ATP; that stretch reads GPMFSGKS. Catalysis depends on Glu83, which acts as the Proton acceptor. Phe113 is a substrate binding site. Positions 138 and 141 each coordinate Zn(2+). 157-161 is a binding site for substrate; the sequence is IEIIG. Zn(2+)-binding residues include Cys170 and Cys173.

Belongs to the thymidine kinase family. In terms of assembly, homotetramer. Two molecules of substrate bind to each enzyme tetramer.

The catalysed reaction is thymidine + ATP = dTMP + ADP + H(+). In terms of biological role, phosphorylates thymidine and thymidine analogs, such as azidothymidine (AZT). Part of the salvage pathway for pyrimidine deoxyribonucleotide synthesis. The polypeptide is Thymidine kinase (OPG101) (Variola virus (isolate Human/India/Ind3/1967) (VARV)).